Here is a 206-residue protein sequence, read N- to C-terminus: ATP-dependent Clp protease proteolytic subunit (206 aa).

Ser107 (nucleophile) is an active-site residue. The active site involves His132.

It belongs to the peptidase S14 family. Fourteen ClpP subunits assemble into 2 heptameric rings which stack back to back to give a disk-like structure with a central cavity, resembling the structure of eukaryotic proteasomes.

The protein localises to the cytoplasm. It catalyses the reaction Hydrolysis of proteins to small peptides in the presence of ATP and magnesium. alpha-casein is the usual test substrate. In the absence of ATP, only oligopeptides shorter than five residues are hydrolyzed (such as succinyl-Leu-Tyr-|-NHMec, and Leu-Tyr-Leu-|-Tyr-Trp, in which cleavage of the -Tyr-|-Leu- and -Tyr-|-Trp bonds also occurs).. Cleaves peptides in various proteins in a process that requires ATP hydrolysis. Has a chymotrypsin-like activity. Plays a major role in the degradation of misfolded proteins. The polypeptide is ATP-dependent Clp protease proteolytic subunit (Idiomarina loihiensis (strain ATCC BAA-735 / DSM 15497 / L2-TR)).